A 175-amino-acid chain; its full sequence is Protein her-1 (175 aa).

The N-terminal stretch at 1–18 is a signal peptide; the sequence is MRYLPIFVFLGSFGYTET. N-linked (GlcNAc...) asparagine glycosylation is found at Asn98 and Asn163.

The protein resides in the secreted. Its function is as follows. Dictates male development. Probably plays a direct role in cell signaling during C.elegans sex determination. Inhibits the function of tra-2a. The protein is Protein her-1 (her-1) of Caenorhabditis elegans.